A 103-amino-acid polypeptide reads, in one-letter code: MKNPLLRPWLTEKSTGLTEDRGQYVFQVKLDADKIDIKMAVEEKFGVDVKSVRTLNSLGKTRRQNTRKGLVTGKKNDTKKAIVTLGEGQTIDFYSGANPKGDA.

Belongs to the universal ribosomal protein uL23 family. In terms of assembly, part of the 50S ribosomal subunit. Contacts protein L29, and trigger factor when it is bound to the ribosome.

Its function is as follows. One of the early assembly proteins it binds 23S rRNA. One of the proteins that surrounds the polypeptide exit tunnel on the outside of the ribosome. Forms the main docking site for trigger factor binding to the ribosome. The protein is Large ribosomal subunit protein uL23 of Chlorobium phaeovibrioides (strain DSM 265 / 1930) (Prosthecochloris vibrioformis (strain DSM 265)).